The chain runs to 688 residues: Translation initiation factor IF-2 (688 aa).

Basic and acidic residues-rich tracts occupy residues 53–62 (GKEKSEKTKE) and 86–95 (KRDDKNEKVN). The tract at residues 53 to 100 (GKEKSEKTKEEDDEIETTAKNPIKESMNNKKSNKRDDKNEKVNTENAE) is disordered. A tr-type G domain is found at 187 to 354 (KRSPIITVMG…MILLSSEILE (168 aa)). The interval 196–203 (GHVDHGKT) is G1. 196 to 203 (GHVDHGKT) is a GTP binding site. A G2 region spans residues 221-225 (GITQH). The segment at 242–245 (DTPG) is G3. Residues 242-246 (DTPGH) and 296-299 (NKID) contribute to the GTP site. The tract at residues 296–299 (NKID) is G4. A G5 region spans residues 332-334 (SAH).

It belongs to the TRAFAC class translation factor GTPase superfamily. Classic translation factor GTPase family. IF-2 subfamily.

The protein localises to the cytoplasm. One of the essential components for the initiation of protein synthesis. Protects formylmethionyl-tRNA from spontaneous hydrolysis and promotes its binding to the 30S ribosomal subunits. Also involved in the hydrolysis of GTP during the formation of the 70S ribosomal complex. The chain is Translation initiation factor IF-2 from Clostridium botulinum (strain Kyoto / Type A2).